The chain runs to 20 residues: Brevinin-1DYc (20 aa).

An intrachain disulfide couples Cys14 to Cys20.

In terms of tissue distribution, expressed by the skin glands.

It localises to the secreted. Its function is as follows. Antimicrobial peptide. Has low activity against the Gram-positive bacterium S.aureus and the Gram-negative bacterium E.coli (MIC&lt;15 uM). Has a strong hemolytic activity. This is Brevinin-1DYc from Rana dybowskii (Dybovsky's frog).